Consider the following 389-residue polypeptide: snRNA-activating protein complex subunit 1 (389 aa).

Residues 1–15 are compositionally biased toward low complexity; sequence MGTPAGAGTRPTGAG. 3 disordered regions span residues 1–22, 245–276, and 290–389; these read MGTP…GVGI, WHKE…ERCE, and SAVV…KRKC. An SNAPC3-binding region spans residues 20 to 187; it reads VGIPPGLQTD…QKFKDPNDRV (168 aa). Positions 183–287 are SNAPC4-binding; it reads PNDRVMKLIT…AVSLAKIKAK (105 aa). Basic and acidic residues predominate over residues 245–262; sequence WHKERKNPSLKPKLKDGE. Residues S308 and S309 each carry the phosphoserine modification.

Part of the SNAPc complex composed of 5 subunits: SNAPC1, SNAPC2, SNAPC3, SNAPC4 and SNAPC5. SNAPC1 interacts with SNAPC3, SNAPC4 and TBP.

The protein resides in the nucleus. Functionally, part of the SNAPc complex required for the transcription of both RNA polymerase II and III small-nuclear RNA genes. Binds to the proximal sequence element (PSE), a non-TATA-box basal promoter element common to these 2 types of genes. Recruits TBP and BRF2 to the U6 snRNA TATA box. This chain is snRNA-activating protein complex subunit 1 (Snapc1), found in Mus musculus (Mouse).